A 471-amino-acid polypeptide reads, in one-letter code: dTDP-4-dehydro-6-deoxy-alpha-D-glucopyranose 2,3-dehydratase (471 aa).

DTDP-4-dehydro-6-deoxy-alpha-D-glucose is bound by residues Trp67, 155-159, Ser193, Asn238, Trp288, Arg351, 367-369, 372-373, and 405-408; these read TRSNY, QCT, NY, and EGGR.

It belongs to the hexose 2,3-dehydratase family. Homodimer.

It catalyses the reaction dTDP-4-dehydro-6-deoxy-alpha-D-glucose = dTDP-3,4-didehydro-2,6-dideoxy-alpha-D-glucose + H2O. The protein operates within antibiotic biosynthesis. Involved in the biosynthesis of the 2,3,6-trideoxysugar L-epivancosamine, the terminal sugar added to the aglycone scaffold of chloroeremomycin, a member of the glycopeptide antibiotics vancomycin family. Catalyzes the removal of the hydroxyl group at position C-2 of the hexose ring of dTDP-4-dehydro-6-deoxy-alpha-D-glucopyranose, and the oxidation of the hydroxyl group at position C-3 to form a carbonyl functionality. The product of the reaction, dTDP-2,6-dideoxy-D-glycero-hex-2-enos-4-ulose, is a highly unstable diketosugar, which spontaneously forms dTDP-3,4-didehydro-2,6-dideoxy-alpha-D-glucose. In Amycolatopsis orientalis (Nocardia orientalis), this protein is dTDP-4-dehydro-6-deoxy-alpha-D-glucopyranose 2,3-dehydratase.